We begin with the raw amino-acid sequence, 117 residues long: Ig heavy chain V region MOPC 47A (117 aa).

The region spanning 1-113 (EVKLVESGGG…FAYWGZGTLV (113 aa)) is the Ig-like domain.

The sequence is that of Ig heavy chain V region MOPC 47A from Mus musculus (Mouse).